The sequence spans 561 residues: DNA ligase B (561 aa).

Lys125 acts as the N6-AMP-lysine intermediate in catalysis.

The protein belongs to the NAD-dependent DNA ligase family. LigB subfamily.

It carries out the reaction NAD(+) + (deoxyribonucleotide)n-3'-hydroxyl + 5'-phospho-(deoxyribonucleotide)m = (deoxyribonucleotide)n+m + AMP + beta-nicotinamide D-nucleotide.. In terms of biological role, catalyzes the formation of phosphodiester linkages between 5'-phosphoryl and 3'-hydroxyl groups in double-stranded DNA using NAD as a coenzyme and as the energy source for the reaction. This Salmonella arizonae (strain ATCC BAA-731 / CDC346-86 / RSK2980) protein is DNA ligase B.